The chain runs to 384 residues: 1-deoxy-D-xylulose 5-phosphate reductoisomerase (384 aa).

6 residues coordinate NADPH: Thr10, Gly11, Ser12, Ile13, Asn38, and Asn120. Lys121 lines the 1-deoxy-D-xylulose 5-phosphate pocket. Glu122 lines the NADPH pocket. Asp146 is a binding site for Mn(2+). Residues Ser147, Glu148, Ser172, and His195 each contribute to the 1-deoxy-D-xylulose 5-phosphate site. Glu148 is a Mn(2+) binding site. NADPH is bound at residue Gly201. Ser208, Asn213, Lys214, and Glu217 together coordinate 1-deoxy-D-xylulose 5-phosphate. Position 217 (Glu217) interacts with Mn(2+).

It belongs to the DXR family. It depends on Mg(2+) as a cofactor. The cofactor is Mn(2+).

The catalysed reaction is 2-C-methyl-D-erythritol 4-phosphate + NADP(+) = 1-deoxy-D-xylulose 5-phosphate + NADPH + H(+). It participates in isoprenoid biosynthesis; isopentenyl diphosphate biosynthesis via DXP pathway; isopentenyl diphosphate from 1-deoxy-D-xylulose 5-phosphate: step 1/6. Catalyzes the NADPH-dependent rearrangement and reduction of 1-deoxy-D-xylulose-5-phosphate (DXP) to 2-C-methyl-D-erythritol 4-phosphate (MEP). This is 1-deoxy-D-xylulose 5-phosphate reductoisomerase from Protochlamydia amoebophila (strain UWE25).